A 301-amino-acid chain; its full sequence is Glycine--tRNA ligase alpha subunit (301 aa).

This sequence belongs to the class-II aminoacyl-tRNA synthetase family. In terms of assembly, tetramer of two alpha and two beta subunits.

Its subcellular location is the cytoplasm. It carries out the reaction tRNA(Gly) + glycine + ATP = glycyl-tRNA(Gly) + AMP + diphosphate. This chain is Glycine--tRNA ligase alpha subunit, found in Shewanella frigidimarina (strain NCIMB 400).